Here is a 155-residue protein sequence, read N- to C-terminus: Small ribosomal subunit protein uS7c (155 aa).

The protein belongs to the universal ribosomal protein uS7 family. As to quaternary structure, part of the 30S ribosomal subunit.

Its subcellular location is the plastid. The protein resides in the chloroplast. One of the primary rRNA binding proteins, it binds directly to 16S rRNA where it nucleates assembly of the head domain of the 30S subunit. This is Small ribosomal subunit protein uS7c (rps7) from Dioscorea bulbifera (Air potato).